Consider the following 294-residue polypeptide: Light-independent protochlorophyllide reductase iron-sulfur ATP-binding protein (294 aa).

ATP contacts are provided by residues G10–T15 and K39. S14 contacts Mg(2+). [4Fe-4S] cluster-binding residues include C95 and C129. N180–R181 serves as a coordination point for ATP.

This sequence belongs to the NifH/BchL/ChlL family. As to quaternary structure, homodimer. Protochlorophyllide reductase is composed of three subunits; ChlL, ChlN and ChlB. The cofactor is [4Fe-4S] cluster.

The protein resides in the plastid. The protein localises to the chloroplast. The enzyme catalyses chlorophyllide a + oxidized 2[4Fe-4S]-[ferredoxin] + 2 ADP + 2 phosphate = protochlorophyllide a + reduced 2[4Fe-4S]-[ferredoxin] + 2 ATP + 2 H2O. It participates in porphyrin-containing compound metabolism; chlorophyll biosynthesis (light-independent). Functionally, component of the dark-operative protochlorophyllide reductase (DPOR) that uses Mg-ATP and reduced ferredoxin to reduce ring D of protochlorophyllide (Pchlide) to form chlorophyllide a (Chlide). This reaction is light-independent. The L component serves as a unique electron donor to the NB-component of the complex, and binds Mg-ATP. The polypeptide is Light-independent protochlorophyllide reductase iron-sulfur ATP-binding protein (Pleurastrum terricola (Filamentous green alga)).